Reading from the N-terminus, the 417-residue chain is Histidinol-phosphate aminotransferase 1, chloroplastic (417 aa).

The N-terminal 40 residues, 1 to 40, are a transit peptide targeting the chloroplast; the sequence is MGVINVQGSPSFSIHSSESNLRKSRALKKPFCSIRNRVYC. Residue A41 is modified to N-acetylalanine. K277 carries the post-translational modification N6-(pyridoxal phosphate)lysine.

The protein belongs to the class-II pyridoxal-phosphate-dependent aminotransferase family. Histidinol-phosphate aminotransferase subfamily. In terms of assembly, homodimer. Pyridoxal 5'-phosphate is required as a cofactor. Expressed in both vegetative and reproductive tissues.

Its subcellular location is the plastid. The protein resides in the chloroplast. It catalyses the reaction L-histidinol phosphate + 2-oxoglutarate = 3-(imidazol-4-yl)-2-oxopropyl phosphate + L-glutamate. It participates in amino-acid biosynthesis; L-histidine biosynthesis; L-histidine from 5-phospho-alpha-D-ribose 1-diphosphate: step 7/9. The chain is Histidinol-phosphate aminotransferase 1, chloroplastic (HISN6A) from Arabidopsis thaliana (Mouse-ear cress).